Consider the following 118-residue polypeptide: Large ribosomal subunit protein uL18 (118 aa).

The protein belongs to the universal ribosomal protein uL18 family. Part of the 50S ribosomal subunit; part of the 5S rRNA/L5/L18/L25 subcomplex. Contacts the 5S and 23S rRNAs.

This is one of the proteins that bind and probably mediate the attachment of the 5S RNA into the large ribosomal subunit, where it forms part of the central protuberance. In Rickettsia typhi (strain ATCC VR-144 / Wilmington), this protein is Large ribosomal subunit protein uL18.